Consider the following 344-residue polypeptide: Anthranilate phosphoribosyltransferase (344 aa).

5-phospho-alpha-D-ribose 1-diphosphate is bound by residues Gly85, 88-89 (GD), Thr93, 95-98 (NIST), 113-121 (KHGGRSVSS), and Ser125. Residue Gly85 participates in anthranilate binding. Ser97 contacts Mg(2+). Arg171 contributes to the anthranilate binding site. Mg(2+) contacts are provided by Asp230 and Glu231.

Belongs to the anthranilate phosphoribosyltransferase family. In terms of assembly, homodimer. The cofactor is Mg(2+).

The catalysed reaction is N-(5-phospho-beta-D-ribosyl)anthranilate + diphosphate = 5-phospho-alpha-D-ribose 1-diphosphate + anthranilate. It functions in the pathway amino-acid biosynthesis; L-tryptophan biosynthesis; L-tryptophan from chorismate: step 2/5. Catalyzes the transfer of the phosphoribosyl group of 5-phosphorylribose-1-pyrophosphate (PRPP) to anthranilate to yield N-(5'-phosphoribosyl)-anthranilate (PRA). The chain is Anthranilate phosphoribosyltransferase from Delftia acidovorans (strain DSM 14801 / SPH-1).